The following is an 822-amino-acid chain: MKNKYDFKLVEEKRNEKWQKKGFFIAPKQTKKPFSIISPPPNVTGQLHLGHSWNAFIQDSLVRYHKLQGFDVLLLPSVDHAGIATQVKVEEDLAKKGIKKSDLKREEFIKKCYHWKEKQYLKIKEQWDKLGICYDFSKERFTLDQDAQIAVSDFFIKLWEKNLIYRGQKAINWDIKLQTAISNIEVINKPVEQKMYYLKYFLENSNEFLTVATTRIETISSDVALAINPKDKRYLHLVGKKVVHPLTKKLIIIIADSNVSSDFGSGIMKVSAHSILDFEIMEKHNLESKDCIDNYGNLNHEVPEFQGQNRFFARDLIAKKLEKEGFLAKIETVISNVGFSQRSDEIVEILKKPQWFVKMDELAKSLISHLNSKDKIKFYPKNFEKNLRKWFEKIHDWTISRQLWWGHRIPVWCKNDEFKVQIDSPGQGWIQDEDVLDTWFSSGISAFAFLGWPQNFDLIKSYFPTSLLVTGWDILFFWVARMYFSSLFIMKQKPFEKVLLHGLIRDEIGRKMSKSLGNGLDPMEIIEKYGSDTLRQALIFNSSPGKDIKFNIEKLNTAWNLNNKIWNIAKYIADLDTFFAKPDLIDLWMENKIYILKRQIVKNIKKYNFSVIGTEINNFIYGDFSSRYIELIKTRKNGFYARKLLRKVLIILHPFLPFLTDFLMEKIFKMEILEQKMPRIRQFKENQKVENILEIIDNLRTYREKFQISKKIILEYCIINDKFSNAEIDIINKLTFGKWLENKELVIKTKNFEIAIKVPEELKKEQKGRELKEIQFLKSEILRAEKILTNKGFLEKAPREKIDLERTKLEKLKEKLAFYEKK.

Positions 41-51 (PNVTGQLHLGH) match the 'HIGH' region motif. Positions 511–515 (KMSKS) match the 'KMSKS' region motif. Lys514 is an ATP binding site. A coiled-coil region spans residues 765 to 822 (EQKGRELKEIQFLKSEILRAEKILTNKGFLEKAPREKIDLERTKLEKLKEKLAFYEKK).

It belongs to the class-I aminoacyl-tRNA synthetase family. ValS type 1 subfamily. Monomer.

It is found in the cytoplasm. It catalyses the reaction tRNA(Val) + L-valine + ATP = L-valyl-tRNA(Val) + AMP + diphosphate. In terms of biological role, catalyzes the attachment of valine to tRNA(Val). As ValRS can inadvertently accommodate and process structurally similar amino acids such as threonine, to avoid such errors, it has a 'posttransfer' editing activity that hydrolyzes mischarged Thr-tRNA(Val) in a tRNA-dependent manner. In Mesomycoplasma hyopneumoniae (strain 7448) (Mycoplasma hyopneumoniae), this protein is Valine--tRNA ligase.